The following is a 260-amino-acid chain: Cytosolic Fe-S cluster assembly factor Nubp2 homolog 1 (260 aa).

14 to 21 (GKGGVGKS) provides a ligand contact to ATP. [4Fe-4S] cluster is bound by residues Cys-188 and Cys-191.

This sequence belongs to the Mrp/NBP35 ATP-binding proteins family. NUBP2/CFD1 subfamily. Heterotetramer of 2 Nubp1 and 2 Nubp2 chains. Requires [4Fe-4S] cluster as cofactor.

Its subcellular location is the cytoplasm. Functionally, component of the cytosolic iron-sulfur (Fe/S) protein assembly (CIA) machinery. Required for maturation of extramitochondrial Fe-S proteins. The Nubp1-Nubp2 heterotetramer forms a Fe-S scaffold complex, mediating the de novo assembly of an Fe-S cluster and its transfer to target apoproteins. This is Cytosolic Fe-S cluster assembly factor Nubp2 homolog 1 from Drosophila yakuba (Fruit fly).